The primary structure comprises 413 residues: 1-deoxy-D-xylulose 5-phosphate reductoisomerase (413 aa).

The NADPH site is built by threonine 21, glycine 22, serine 23, isoleucine 24, glycine 47, and asparagine 127. Lysine 128 is a 1-deoxy-D-xylulose 5-phosphate binding site. Glutamate 129 lines the NADPH pocket. Position 151 (aspartate 151) interacts with Mn(2+). Serine 152, glutamate 153, serine 177, and histidine 200 together coordinate 1-deoxy-D-xylulose 5-phosphate. A Mn(2+)-binding site is contributed by glutamate 153. NADPH is bound at residue glycine 206. Residues serine 213, asparagine 218, lysine 219, and glutamate 222 each coordinate 1-deoxy-D-xylulose 5-phosphate. Glutamate 222 is a Mn(2+) binding site.

The protein belongs to the DXR family. It depends on Mg(2+) as a cofactor. Mn(2+) is required as a cofactor.

The catalysed reaction is 2-C-methyl-D-erythritol 4-phosphate + NADP(+) = 1-deoxy-D-xylulose 5-phosphate + NADPH + H(+). The protein operates within isoprenoid biosynthesis; isopentenyl diphosphate biosynthesis via DXP pathway; isopentenyl diphosphate from 1-deoxy-D-xylulose 5-phosphate: step 1/6. Its function is as follows. Catalyzes the NADPH-dependent rearrangement and reduction of 1-deoxy-D-xylulose-5-phosphate (DXP) to 2-C-methyl-D-erythritol 4-phosphate (MEP). The sequence is that of 1-deoxy-D-xylulose 5-phosphate reductoisomerase from Mycobacterium bovis (strain ATCC BAA-935 / AF2122/97).